The chain runs to 27 residues: Conotoxin Lo6/7b (27 aa).

Disulfide bonds link C2/C16, C9/C19, and C15/C26. Tyrosine amide is present on Y27.

As to expression, expressed by the venom duct.

The protein resides in the secreted. In terms of biological role, 1 uM of this toxin does not show any effect on voltage-gated sodium and potassium channels. Does not show antibacterial activity on both Gram-negative and Gram-positive bacteria. In Conasprella longurionis (Cone snail), this protein is Conotoxin Lo6/7b.